The sequence spans 174 residues: Shikimate kinase (174 aa).

10-15 (GSGKTA) is a binding site for ATP. Mg(2+) is bound at residue Thr14. 3 residues coordinate substrate: Asp32, Arg56, and Gly78. Arg118 contributes to the ATP binding site. A substrate-binding site is contributed by Arg137. Arg154 provides a ligand contact to ATP.

The protein belongs to the shikimate kinase family. Monomer. It depends on Mg(2+) as a cofactor.

It localises to the cytoplasm. It carries out the reaction shikimate + ATP = 3-phosphoshikimate + ADP + H(+). It participates in metabolic intermediate biosynthesis; chorismate biosynthesis; chorismate from D-erythrose 4-phosphate and phosphoenolpyruvate: step 5/7. Functionally, catalyzes the specific phosphorylation of the 3-hydroxyl group of shikimic acid using ATP as a cosubstrate. The sequence is that of Shikimate kinase from Symbiobacterium thermophilum (strain DSM 24528 / JCM 14929 / IAM 14863 / T).